Reading from the N-terminus, the 294-residue chain is Xyloglucan endotransglucosylase protein 34 (294 aa).

The first 22 residues, 1–22, serve as a signal peptide directing secretion; sequence MAAAYPWTLFLGMLVMVSGTMG. One can recognise a GH16 domain in the interval 23–221; sequence AALRKPVDVA…WSKAPFIASY (199 aa). Catalysis depends on glutamate 107, which acts as the Nucleophile. The active-site Proton donor is glutamate 111. Glutamate 111 is a xyloglucan binding site. Asparagine 115 is a glycosylation site (N-linked (GlcNAc...) asparagine). Xyloglucan is bound by residues 124–126, 134–136, 200–201, and glycine 205; these read QTN, DRE, and DW. 2 cysteine pairs are disulfide-bonded: cysteine 229–cysteine 238 and cysteine 275–cysteine 288. Arginine 280 lines the xyloglucan pocket.

The protein belongs to the glycosyl hydrolase 16 family. XTH group 1 subfamily. Post-translationally, contains at least one intrachain disulfide bond essential for its enzymatic activity. In terms of processing, N-glycosylated. Contains N-acetylglucosamine and mannose. Glycosylation is not essential for its catalytic activity. As to expression, expressed in mature gelatinous (G) cell wall layer of the tension wood fibers. Highly expressed in the outer zone of the G layer close to the secondary S2 layer. Not expressed in the mature walls of the ray cells or vessel elements (at protein level). Highest expression in both the phloem/cambium and differentiating xylem of the mature stem containing primarily secondary cell wall forming cells, in root tips and young roots. Expressed at low levels in apical bud.

The protein localises to the secreted. The protein resides in the cell wall. It is found in the extracellular space. It localises to the apoplast. Its subcellular location is the cytoplasm. It catalyses the reaction breaks a beta-(1-&gt;4) bond in the backbone of a xyloglucan and transfers the xyloglucanyl segment on to O-4 of the non-reducing terminal glucose residue of an acceptor, which can be a xyloglucan or an oligosaccharide of xyloglucan.. Catalyzes xyloglucan endotransglycosylation (XET). Cleaves and religates xyloglucan polymers. Does not catalyze xyloglucan endohydrolysis (XEH). Involved in early phases of secondary (S) cell wall formation in fibers of the xylem and phloem vascular tissues of wood stems. May play a role in restructuring primary cell walls, possibly creating and reinforcing the connections between the primary and S cell wall layers. Functions in the gelatinous (G) layers of the tension wood fibers that are involved in bending of the wood stems. May play a role in G fiber shrinking by repairing broken xyloglucan cross-links between G and S2 cell wall layers via its XET activity to maintain connections between the layers. The chain is Xyloglucan endotransglucosylase protein 34 from Populus tremula x Populus tremuloides (Hybrid aspen).